Reading from the N-terminus, the 345-residue chain is L-Ala-D/L-Glu epimerase (345 aa).

Substrate contacts are provided by Thr134 and Lys159. The active-site Proton acceptor; specific for (R)-substrate epimerization is Lys161. Asp188 contacts Mg(2+). Asn190 provides a ligand contact to substrate. Mg(2+)-binding residues include Glu216 and Asp241. Lys265 functions as the Proton acceptor; specific for (S)-substrate epimerization in the catalytic mechanism. Cys292, Asp317, and Asp319 together coordinate substrate.

It belongs to the mandelate racemase/muconate lactonizing enzyme family. The cofactor is Mg(2+).

The catalysed reaction is L-alanyl-L-glutamate = L-alanyl-D-glutamate. It participates in cell wall degradation; peptidoglycan degradation. Catalyzes the epimerization of L-Ala-D-Glu to L-Ala-L-Glu and has probably a role in the metabolism of the murein peptide, of which L-Ala-D-Glu is a component. Is also able to catalyze the reverse reaction and the epimerization of a broad range of other dipeptides; is most efficient with L-Ala-D/L-Phe, L-Ala-D/L-Tyr, and L-Ala-D/L-His. This is L-Ala-D/L-Glu epimerase from Thermotoga maritima (strain ATCC 43589 / DSM 3109 / JCM 10099 / NBRC 100826 / MSB8).